The following is a 361-amino-acid chain: Phosphoserine aminotransferase (361 aa).

Arginine 43 is an L-glutamate binding site. Pyridoxal 5'-phosphate-binding positions include 77–78 (AS), tryptophan 103, threonine 153, aspartate 173, and glutamine 196. Lysine 197 carries the post-translational modification N6-(pyridoxal phosphate)lysine. 238 to 239 (NT) contacts pyridoxal 5'-phosphate.

Belongs to the class-V pyridoxal-phosphate-dependent aminotransferase family. SerC subfamily. As to quaternary structure, homodimer. The cofactor is pyridoxal 5'-phosphate.

Its subcellular location is the cytoplasm. The catalysed reaction is O-phospho-L-serine + 2-oxoglutarate = 3-phosphooxypyruvate + L-glutamate. It carries out the reaction 4-(phosphooxy)-L-threonine + 2-oxoglutarate = (R)-3-hydroxy-2-oxo-4-phosphooxybutanoate + L-glutamate. Its pathway is amino-acid biosynthesis; L-serine biosynthesis; L-serine from 3-phospho-D-glycerate: step 2/3. It functions in the pathway cofactor biosynthesis; pyridoxine 5'-phosphate biosynthesis; pyridoxine 5'-phosphate from D-erythrose 4-phosphate: step 3/5. Functionally, catalyzes the reversible conversion of 3-phosphohydroxypyruvate to phosphoserine and of 3-hydroxy-2-oxo-4-phosphonooxybutanoate to phosphohydroxythreonine. The sequence is that of Phosphoserine aminotransferase from Pseudomonas syringae pv. tomato (strain ATCC BAA-871 / DC3000).